A 375-amino-acid polypeptide reads, in one-letter code: Peptidyl-prolyl cis-trans isomerase D (375 aa).

The PPIase cyclophilin-type domain occupies 7 to 169 (YFDITIANEP…QEVTISSAGV (163 aa)). 3 TPR repeats span residues 217–250 (AGKL…LDVH), 270–307 (LPLL…PNLS), and 312–345 (GKAL…VPGD).

It belongs to the cyclophilin-type PPIase family. PPIase D subfamily.

Its subcellular location is the cytoplasm. The catalysed reaction is [protein]-peptidylproline (omega=180) = [protein]-peptidylproline (omega=0). Its function is as follows. PPIases accelerate the folding of proteins. It catalyzes the cis-trans isomerization of proline imidic peptide bonds in oligopeptides. This is Peptidyl-prolyl cis-trans isomerase D (CPR6) from Cryptococcus neoformans var. neoformans serotype D (strain B-3501A) (Filobasidiella neoformans).